The following is a 204-amino-acid chain: bMERB domain-containing protein 1 (204 aa).

Residues Leu-3–Asp-150 form the bMERB domain. Positions Val-162–Thr-187 are disordered.

This Homo sapiens (Human) protein is bMERB domain-containing protein 1.